Consider the following 431-residue polypeptide: Trigger factor (431 aa).

In terms of domain architecture, PPIase FKBP-type spans Thr165–Pro250.

This sequence belongs to the FKBP-type PPIase family. Tig subfamily.

Its subcellular location is the cytoplasm. The catalysed reaction is [protein]-peptidylproline (omega=180) = [protein]-peptidylproline (omega=0). Involved in protein export. Acts as a chaperone by maintaining the newly synthesized protein in an open conformation. Functions as a peptidyl-prolyl cis-trans isomerase. The polypeptide is Trigger factor (Aster yellows witches'-broom phytoplasma (strain AYWB)).